Here is a 499-residue protein sequence, read N- to C-terminus: MADTAITPTRSQNYPEWYQQVIVAADMAENSPVRGCMVIKPWGYAVWENMQGVLDRMFKDTGHVNAYFPLLIPLSFLEKEAAHVEGFAKECAVVTHHRLKGDGNGKLIPDGELEEPLIIRPTSETIIGHQFAKWVKSYRDLPILVNQWCNVMRWEMRTRMFLRTAEFLWQEGHTVHATAKEAQEETLQMLNVYSEFAEQYMAMPVIKGMKTPDERFPGAVDTYTIEALMQDKKALQAGTSHFLGQNFAKASEIKYLSAEGKEEFAWTTSWGVSTRLIGGLIMTHSDDNGFVVPPRLAPLHVVIIPIYRNDEERAQVLDYVKALEKDLKAQNYVGSSVRVKIDDRDMRGGEKAWQYIKQGVPVRVEVGPRDMAKGEVFVGRRDRGPKEKASMERNAFVANITNLLQEMQDGLFERAKQMRDESIKTITNLQDFEKYFSGGENTAPGFAKVPWCEAGMGHELLAQLKVTPRCMPLDQEPVQGNCIFSGKPATKWVLFAKSY.

It belongs to the class-II aminoacyl-tRNA synthetase family. ProS type 3 subfamily. In terms of assembly, homodimer.

The protein localises to the cytoplasm. It carries out the reaction tRNA(Pro) + L-proline + ATP = L-prolyl-tRNA(Pro) + AMP + diphosphate. In terms of biological role, catalyzes the attachment of proline to tRNA(Pro) in a two-step reaction: proline is first activated by ATP to form Pro-AMP and then transferred to the acceptor end of tRNA(Pro). The sequence is that of Proline--tRNA ligase from Bdellovibrio bacteriovorus (strain ATCC 15356 / DSM 50701 / NCIMB 9529 / HD100).